A 379-amino-acid chain; its full sequence is Queuine tRNA-ribosyltransferase (379 aa).

Residue Asp94 is the Proton acceptor of the active site. Substrate contacts are provided by residues 94–98, Asp148, Gln191, and Gly218; that span reads DSGGF. Residues 249-255 are RNA binding; it reads GVGSPDA. The active-site Nucleophile is Asp268. An RNA binding; important for wobble base 34 recognition region spans residues 273–277; it reads TRIAR. Cys306, Cys308, Cys311, and His337 together coordinate Zn(2+).

Belongs to the queuine tRNA-ribosyltransferase family. As to quaternary structure, homodimer. Within each dimer, one monomer is responsible for RNA recognition and catalysis, while the other monomer binds to the replacement base PreQ1. It depends on Zn(2+) as a cofactor.

It catalyses the reaction 7-aminomethyl-7-carbaguanine + guanosine(34) in tRNA = 7-aminomethyl-7-carbaguanosine(34) in tRNA + guanine. It functions in the pathway tRNA modification; tRNA-queuosine biosynthesis. In terms of biological role, catalyzes the base-exchange of a guanine (G) residue with the queuine precursor 7-aminomethyl-7-deazaguanine (PreQ1) at position 34 (anticodon wobble position) in tRNAs with GU(N) anticodons (tRNA-Asp, -Asn, -His and -Tyr). Catalysis occurs through a double-displacement mechanism. The nucleophile active site attacks the C1' of nucleotide 34 to detach the guanine base from the RNA, forming a covalent enzyme-RNA intermediate. The proton acceptor active site deprotonates the incoming PreQ1, allowing a nucleophilic attack on the C1' of the ribose to form the product. After dissociation, two additional enzymatic reactions on the tRNA convert PreQ1 to queuine (Q), resulting in the hypermodified nucleoside queuosine (7-(((4,5-cis-dihydroxy-2-cyclopenten-1-yl)amino)methyl)-7-deazaguanosine). The polypeptide is Queuine tRNA-ribosyltransferase (Staphylococcus aureus (strain bovine RF122 / ET3-1)).